A 210-amino-acid chain; its full sequence is MHALARVWARLEEGLIAFLLAAMTLVTFVYVVLNNLYTLLYDLADLWEGGNETLLAIGDGVLTLAQEMTWSNALTKALFAWLIFLGIAYGVRTAGHLGVDVLVKLASRPVQRVLGVIACLACLGYAGLLCVASYDWVKTLFIAGIGAEDLDHFGIRQWHIGLIVPVGFALVFIRFAEILVRILRNRQTGLGLADEAADALKLTEHEEPKA.

The next 4 helical transmembrane spans lie at Glu-13–Leu-33, Ala-77–Leu-97, Val-113–Ser-133, and Ile-160–Val-180.

This sequence belongs to the TRAP transporter small permease family. In terms of assembly, the complex comprises the extracytoplasmic solute receptor protein DctP, and the two transmembrane proteins DctQ and DctM.

It localises to the cell inner membrane. Functionally, part of the tripartite ATP-independent periplasmic (TRAP) transport system DctPQM involved in C4-dicarboxylates uptake. The protein is C4-dicarboxylate TRAP transporter small permease protein DctQ of Pseudomonas aeruginosa (strain ATCC 15692 / DSM 22644 / CIP 104116 / JCM 14847 / LMG 12228 / 1C / PRS 101 / PAO1).